A 275-amino-acid chain; its full sequence is Gamma carbonic anhydrase 1, mitochondrial (275 aa).

Residues 1–43 (MGTLGRAFYSVGFWIRETGQALDRLGCRLQGKNYFREQLSRHR) constitute a mitochondrion transit peptide. Residues 86 to 88 (RGD) and 101 to 102 (QD) contribute to the substrate site. Residues H107, H130, and H135 each contribute to the Zn(2+) site. N209 serves as a coordination point for substrate. The disordered stretch occupies residues 256–275 (LNLPNNILPDKETKRPSNVN). The span at 264–275 (PDKETKRPSNVN) shows a compositional bias: basic and acidic residues.

The protein belongs to the gamma-class carbonic anhydrase family. Homotrimer. Component of the mitochondrial oxidoreductase respiratory chain complex I; element of the extra matrix-exposed domain, which is attached to the membrane arm of this complex. Zn(2+) serves as cofactor.

It localises to the mitochondrion membrane. Its function is as follows. Enzyme involved in the catabolism of H(2)CO(3) but that does not mediates the reversible hydration of carbon dioxide. Mediates complex I assembly in mitochondria and respiration. The chain is Gamma carbonic anhydrase 1, mitochondrial (GAMMACA1) from Arabidopsis thaliana (Mouse-ear cress).